The following is a 204-amino-acid chain: Uracil-DNA glycosylase (204 aa).

D47 serves as the catalytic Proton acceptor.

This sequence belongs to the uracil-DNA glycosylase (UDG) superfamily. UNG family.

It is found in the host nucleus. It carries out the reaction Hydrolyzes single-stranded DNA or mismatched double-stranded DNA and polynucleotides, releasing free uracil.. Functionally, excises uracil residues from the DNA which can arise as a result of misincorporation of dUMP residues by DNA polymerase or deamination of cytosines. Therefore may reduce deleterious uracil incorporation into the viral genome, particularly in terminally differentiated cells which lack DNA repair enzymes. This chain is Uracil-DNA glycosylase (UL2), found in Bos taurus (Bovine).